The following is a 185-amino-acid chain: Ribosome-recycling factor (185 aa).

This sequence belongs to the RRF family.

The protein resides in the cytoplasm. Its function is as follows. Responsible for the release of ribosomes from messenger RNA at the termination of protein biosynthesis. May increase the efficiency of translation by recycling ribosomes from one round of translation to another. The sequence is that of Ribosome-recycling factor from Hamiltonella defensa subsp. Acyrthosiphon pisum (strain 5AT).